The chain runs to 302 residues: Sulfate adenylyltransferase subunit 2 (302 aa).

The disordered stretch occupies residues 280 to 302 (RQGRAIDHDQSGSMELKKRQGYF).

Belongs to the PAPS reductase family. CysD subfamily. In terms of assembly, heterodimer composed of CysD, the smaller subunit, and CysN.

The catalysed reaction is sulfate + ATP + H(+) = adenosine 5'-phosphosulfate + diphosphate. The protein operates within sulfur metabolism; hydrogen sulfide biosynthesis; sulfite from sulfate: step 1/3. Functionally, with CysN forms the ATP sulfurylase (ATPS) that catalyzes the adenylation of sulfate producing adenosine 5'-phosphosulfate (APS) and diphosphate, the first enzymatic step in sulfur assimilation pathway. APS synthesis involves the formation of a high-energy phosphoric-sulfuric acid anhydride bond driven by GTP hydrolysis by CysN coupled to ATP hydrolysis by CysD. The sequence is that of Sulfate adenylyltransferase subunit 2 from Vibrio vulnificus (strain CMCP6).